An 82-amino-acid chain; its full sequence is uncharacterized protein (82 aa).

This is an uncharacterized protein from Sinorhizobium fredii (strain NBRC 101917 / NGR234).